We begin with the raw amino-acid sequence, 379 residues long: Alternative oxidase 1, mitochondrial (379 aa).

A compositionally biased stretch (low complexity) spans 33-50 (TTTTSTKSRSSTSTAATT). Positions 33 to 76 (TTTTSTKSRSSTSTAATTVGNSNPKSPIDEDNLEKPGTIPTKHK) are disordered. 3 residues coordinate Fe cation: Glu180, Glu219, and His222. A helical transmembrane segment spans residues 234 to 256 (WFTRSIIYIGQGVFTNIFFLVYL). Fe cation contacts are provided by Glu270, Glu271, Glu326, and His329.

This sequence belongs to the alternative oxidase family. It depends on Fe cation as a cofactor.

Its subcellular location is the mitochondrion inner membrane. Its function is as follows. Catalyzes cyanide-resistant oxygen consumption. May increase respiration when the cytochrome respiratory pathway is restricted, or in response to low temperatures. In Candida albicans (Yeast), this protein is Alternative oxidase 1, mitochondrial (AOX1).